The primary structure comprises 324 residues: Beta-ketoacyl-[acyl-carrier-protein] synthase III (324 aa).

Catalysis depends on residues Cys-112 and His-249. An ACP-binding region spans residues 250–254; the sequence is QANDR. The active site involves Asn-279.

Belongs to the thiolase-like superfamily. FabH family. In terms of assembly, homodimer.

The protein resides in the cytoplasm. It carries out the reaction malonyl-[ACP] + acetyl-CoA + H(+) = 3-oxobutanoyl-[ACP] + CO2 + CoA. Its pathway is lipid metabolism; fatty acid biosynthesis. Catalyzes the condensation reaction of fatty acid synthesis by the addition to an acyl acceptor of two carbons from malonyl-ACP. Catalyzes the first condensation reaction which initiates fatty acid synthesis and may therefore play a role in governing the total rate of fatty acid production. Possesses both acetoacetyl-ACP synthase and acetyl transacylase activities. Its substrate specificity determines the biosynthesis of branched-chain and/or straight-chain of fatty acids. The protein is Beta-ketoacyl-[acyl-carrier-protein] synthase III of Streptococcus gordonii (strain Challis / ATCC 35105 / BCRC 15272 / CH1 / DL1 / V288).